A 72-amino-acid chain; its full sequence is Gene 35 protein (72 aa).

In Mycobacterium phage L5 (Mycobacteriophage L5), this protein is Gene 35 protein (35).